The chain runs to 659 residues: MVLSTEENRSVDLVNLPSVPLPDGEAGVGENNKDSVNNLCSQYEEKVRPCIDLIDSLRALGVEQDLALPAIAVIGDQSSGKSSVLEALSGVALPRGSGIVTRCPLVLKLKKLNQGEEWKGKVTYDDIEVELSDPSEVEEAINTGQNHIAGVGLGISDKLISLDVSSPHVPDLTLIDLPGITRVAVGNQPSDIGRQIKRLITNYIQKQETINLVVVPSNVDIATTEALSMAQEVDPDGDRTIGILTKPDLVDRGTEDKVVDVVRNLVCHLKKGYMIVKCRGQQDIQEQLSLAEALQKEQVFFKEHPQFRALLEDGKATVPCLAERLTMELISHICKSLPLLENQIKESHQSTSEELQKYGADIPEDENEKTLFLIEKINAFNQDITAIVEGEEIVREKECRLFTKLRKEFFLWSEEIERNFQKGSDALYKEVYTFEMQYRGRELPGFVNYKTFENIIRRQIKTLEEPAMEMLHKVTEIVRAAFTTVSEKNFSEFFNLHRTTKSKLEDIRLEQETEAEKAIRLHFQMEQIIYCQDQIYRKALQKVREEEAEEEERKHGKSRSAQSPNLQTSSMDEIFQHLNAYRQEAHNCISSHIPLIIQYFILKMFAEKLQKGMLQLLQDKDSCSWLLKEKSDTSEKRRFLKERLARLAQAQRRLAKFPG.

In terms of domain architecture, Dynamin-type G spans 65–338 (DLALPAIAVI…LISHICKSLP (274 aa)). The tract at residues 75-82 (GDQSSGKS) is G1 motif. 75–82 (GDQSSGKS) is a GTP binding site. The interval 100 to 102 (VTR) is G2 motif. Residues 176-179 (DLPG) form a G3 motif region. Residues 176-180 (DLPGI) and 245-248 (TKPD) contribute to the GTP site. Positions 245–248 (TKPD) are G4 motif. The G5 motif stretch occupies residues 277–280 (KCRG). The interval 547–568 (EAEEEERKHGKSRSAQSPNLQT) is disordered. A compositionally biased stretch (polar residues) spans 559-568 (RSAQSPNLQT). Residues 571–659 (MDEIFQHLNA…AQRRLAKFPG (89 aa)) enclose the GED domain.

Belongs to the TRAFAC class dynamin-like GTPase superfamily. Dynamin/Fzo/YdjA family.

Its subcellular location is the cytoplasm. In terms of biological role, does not show activity against influenza virus or VSV; although it only differs from Mx2 by 8 positions. This chain is Interferon-induced GTP-binding protein Mx3 (Mx3), found in Rattus norvegicus (Rat).